The primary structure comprises 305 residues: MNPDSAAGRSSRRAFLAAVGGVAAGGLTATAGCLGRGEEAPTVSILAAGSLQRALTTEFDAPDGTRIEVEAHGSARVARMVDDDQRDPDIVALADPALFDAPLSVPWYATFANNALVVAYNPQTEGGTRVTEAASWPDALLDDAVSLGRTDPDLDPLGYRTRFALALAADHYDRPALTADLLRRDQIYPETQLLAQFDAGGVDAAFVYRSMAVERDYPYLELPAAINLSDPDHASAYATVSYTLPDGVTVRGGPIRYAATRRTDTAAAKSVFEALVGTAGDFLEPSGFTVRASHPHYFGDVPPTA.

Positions 1 to 40 (MNPDSAAGRSSRRAFLAAVGGVAAGGLTATAGCLGRGEEA) form a signal peptide, tat-type signal.

This sequence belongs to the bacterial solute-binding protein 1 family. WtpA subfamily. In terms of assembly, the complex is composed of two ATP-binding proteins, two transmembrane proteins (HVO_B0370) and a solute-binding protein (HVO_B0369). Predicted to be exported by the Tat system. The position of the signal peptide cleavage has not been experimentally proven.

Part of an ABC transporter complex involved in molybdenum import. In Haloferax volcanii (strain ATCC 29605 / DSM 3757 / JCM 8879 / NBRC 14742 / NCIMB 2012 / VKM B-1768 / DS2) (Halobacterium volcanii), this protein is Putative ABC transporter molybdenum-binding protein HVO_B0369.